Reading from the N-terminus, the 104-residue chain is Glutaredoxin (104 aa).

The Glutaredoxin domain occupies 3-103 (MIKAQELVSS…PLLTEAGAVK (101 aa)). A disulfide bridge links Cys23 with Cys26.

Belongs to the glutaredoxin family. CPYC subfamily.

Its subcellular location is the cytoplasm. Its function is as follows. Has a glutathione-disulfide oxidoreductase activity in the presence of NADPH and glutathione reductase. Reduces low molecular weight disulfides and proteins. This is Glutaredoxin from Vernicia fordii (Tung).